Reading from the N-terminus, the 565-residue chain is Mitochondrial distribution and morphology protein 34 (565 aa).

Residues Met1–Leu195 form the SMP-LTD domain. Disordered stretches follow at residues Glu207–Leu236, Pro296–Thr317, and Ser348–Pro504. Basic residues predominate over residues Arg358–Arg370. A compositionally biased stretch (basic and acidic residues) spans Val371–Glu381. The segment covering Ser382–Ser401 has biased composition (polar residues). Basic and acidic residues-rich tracts occupy residues Leu446–Val472 and Ile483–Glu496.

Belongs to the MDM34 family. As to quaternary structure, component of the ER-mitochondria encounter structure (ERMES) or MDM complex, composed of mmm1, mdm10, mdm12 and mdm34.

The protein resides in the mitochondrion outer membrane. Functionally, component of the ERMES/MDM complex, which serves as a molecular tether to connect the endoplasmic reticulum (ER) and mitochondria. Components of this complex are involved in the control of mitochondrial shape and protein biogenesis, and function in nonvesicular lipid trafficking between the ER and mitochondria. Mdm34 is required for the interaction of the ER-resident membrane protein mmm1 and the outer mitochondrial membrane-resident beta-barrel protein mdm10. This chain is Mitochondrial distribution and morphology protein 34, found in Aspergillus terreus (strain NIH 2624 / FGSC A1156).